Reading from the N-terminus, the 423-residue chain is Osteomodulin (423 aa).

The N-terminal stretch at 1 to 20 (MGFLSPIYVLFFCFGVRVYC) is a signal peptide. Residues Tyr-22, Tyr-25, Tyr-31, Tyr-39, Tyr-51, and Tyr-77 each carry the sulfotyrosine modification. The 39-residue stretch at 53-91 (VPFYNNILGCAKECFCPTNFPTSMYCDNRKLKTIPIIPM) folds into the LRRNT domain. 11 LRR repeats span residues 92 to 113 (HIQQLNLQFNDIEAVTANSFIN), 116 to 129 (HLKEINLSHNKIKS), 142 to 164 (NLQQLHLEHNNLEEFPFPLPKSL), 165 to 184 (ERLLLGYNEISILPTNAMDG), 187 to 207 (NVTMLDLCYNHLSDSMLKEKT), 213 to 233 (KLMQLNLCNNRLESMPLGLPS), 234 to 255 (SLMYLSLENNSISSIPDNYFDK), 258 to 279 (KLHALRISHNKLEDIPYDIFNL), 281 to 294 (NLIELNVGHNKLKQ), 301 to 322 (NLEHLYLQNNEIESINVTMICP), and 331 to 353 (HLTYLRVDQNKLKEPISSYIFFC). Asn-113 and Asn-121 each carry an N-linked (GlcNAc...) asparagine glycan. Residue Asn-187 is glycosylated (N-linked (GlcNAc...) asparagine). Asn-242 and Asn-278 each carry an N-linked (GlcNAc...) asparagine glycan. A glycan (N-linked (GlcNAc...) asparagine) is linked at Asn-316. A disulfide bond links Cys-321 and Cys-353. The interval 381-406 (RSYQEEEEEDDHDSQDNTLEGQEVSD) is disordered. Sulfotyrosine is present on residues Tyr-413 and Tyr-414.

The protein belongs to the small leucine-rich proteoglycan (SLRP) family. SLRP class II subfamily. In terms of assembly, binds the alpha(V)beta(3)-integrin. Post-translationally, glycosylated; contains keratan sulfate. In terms of tissue distribution, bone specific.

The protein resides in the secreted. It is found in the extracellular space. Its subcellular location is the extracellular matrix. In terms of biological role, may be implicated in biomineralization processes. Has a function in binding of osteoblasts via the alpha(V)beta(3)-integrin. This Mus musculus (Mouse) protein is Osteomodulin (Omd).